The following is a 103-amino-acid chain: Nucleoid-associated protein Adeh_3636 (103 aa).

It belongs to the YbaB/EbfC family. As to quaternary structure, homodimer.

The protein resides in the cytoplasm. It is found in the nucleoid. Its function is as follows. Binds to DNA and alters its conformation. May be involved in regulation of gene expression, nucleoid organization and DNA protection. The sequence is that of Nucleoid-associated protein Adeh_3636 from Anaeromyxobacter dehalogenans (strain 2CP-C).